We begin with the raw amino-acid sequence, 307 residues long: Dihydroorotate dehydrogenase B (NAD(+)), catalytic subunit (307 aa).

FMN is bound by residues Ser-22 and 46-47 (KG). Substrate is bound by residues Lys-46 and 70–74 (NAVGL). Asn-100 and Asn-128 together coordinate FMN. Asn-128 contributes to the substrate binding site. Cys-131 acts as the Nucleophile in catalysis. The FMN site is built by Lys-166 and Val-192. 193 to 194 (NT) is a binding site for substrate. FMN-binding positions include Gly-218 and 244–245 (GG).

The protein belongs to the dihydroorotate dehydrogenase family. Type 1 subfamily. As to quaternary structure, heterotetramer of 2 PyrK and 2 PyrD type B subunits. FMN is required as a cofactor.

The protein resides in the cytoplasm. The catalysed reaction is (S)-dihydroorotate + NAD(+) = orotate + NADH + H(+). Its pathway is pyrimidine metabolism; UMP biosynthesis via de novo pathway; orotate from (S)-dihydroorotate (NAD(+) route): step 1/1. Catalyzes the conversion of dihydroorotate to orotate with NAD(+) as electron acceptor. This Porphyromonas gingivalis (strain ATCC BAA-308 / W83) protein is Dihydroorotate dehydrogenase B (NAD(+)), catalytic subunit (pyrD).